The sequence spans 477 residues: Probable cytosol aminopeptidase (477 aa).

Residues Lys245 and Asp250 each coordinate Mn(2+). The active site involves Lys257. Residues Asp268, Asp327, and Glu329 each coordinate Mn(2+). Residue Arg331 is part of the active site.

The protein belongs to the peptidase M17 family. Requires Mn(2+) as cofactor.

The protein localises to the cytoplasm. It catalyses the reaction Release of an N-terminal amino acid, Xaa-|-Yaa-, in which Xaa is preferably Leu, but may be other amino acids including Pro although not Arg or Lys, and Yaa may be Pro. Amino acid amides and methyl esters are also readily hydrolyzed, but rates on arylamides are exceedingly low.. It carries out the reaction Release of an N-terminal amino acid, preferentially leucine, but not glutamic or aspartic acids.. In terms of biological role, presumably involved in the processing and regular turnover of intracellular proteins. Catalyzes the removal of unsubstituted N-terminal amino acids from various peptides. This is Probable cytosol aminopeptidase from Exiguobacterium sibiricum (strain DSM 17290 / CCUG 55495 / CIP 109462 / JCM 13490 / 255-15).